Reading from the N-terminus, the 338-residue chain is Fructose-1,6-bisphosphatase class 1 (338 aa).

Residues E94, D116, L118, and D119 each contribute to the Mg(2+) site. Residues 119-122 (DGSS), N210, and K276 contribute to the substrate site. E282 contacts Mg(2+).

It belongs to the FBPase class 1 family. Homotetramer. Requires Mg(2+) as cofactor.

It localises to the cytoplasm. It catalyses the reaction beta-D-fructose 1,6-bisphosphate + H2O = beta-D-fructose 6-phosphate + phosphate. Its pathway is carbohydrate biosynthesis; gluconeogenesis. This chain is Fructose-1,6-bisphosphatase class 1, found in Burkholderia thailandensis (strain ATCC 700388 / DSM 13276 / CCUG 48851 / CIP 106301 / E264).